Reading from the N-terminus, the 130-residue chain is Phosphoribosyl-AMP cyclohydrolase (130 aa).

Asp-77 is a binding site for Mg(2+). Cys-78 lines the Zn(2+) pocket. Mg(2+) is bound by residues Asp-79 and Asp-81. Residues Cys-95 and Cys-102 each contribute to the Zn(2+) site.

Belongs to the PRA-CH family. Homodimer. Mg(2+) serves as cofactor. Zn(2+) is required as a cofactor.

The protein localises to the cytoplasm. It carries out the reaction 1-(5-phospho-beta-D-ribosyl)-5'-AMP + H2O = 1-(5-phospho-beta-D-ribosyl)-5-[(5-phospho-beta-D-ribosylamino)methylideneamino]imidazole-4-carboxamide. The protein operates within amino-acid biosynthesis; L-histidine biosynthesis; L-histidine from 5-phospho-alpha-D-ribose 1-diphosphate: step 3/9. In terms of biological role, catalyzes the hydrolysis of the adenine ring of phosphoribosyl-AMP. The chain is Phosphoribosyl-AMP cyclohydrolase from Pseudomonas putida (strain W619).